Consider the following 2397-residue polypeptide: Cell wall alpha-1,3-glucan synthase mok11 (2397 aa).

The disordered stretch occupies residues 1683–1705; it reads SNQQSFDFKSSESDSFPQKSPSV. The span at 1687–1698 shows a compositional bias: low complexity; it reads SFDFKSSESDSF.

Belongs to the glycosyltransferase group 1 family.

It carries out the reaction [(1-&gt;3)-alpha-D-glucosyl](n) + UDP-alpha-D-glucose = [(1-&gt;3)-alpha-D-glucosyl](n+1) + UDP + H(+). The protein is Cell wall alpha-1,3-glucan synthase mok11 (mok11) of Schizosaccharomyces pombe (strain 972 / ATCC 24843) (Fission yeast).